Consider the following 184-residue polypeptide: Photosystem I assembly protein Ycf4 (184 aa).

The next 2 helical transmembrane spans lie at 21 to 43 (NFCW…ISSY) and 58 to 80 (LFFP…SSYL).

It belongs to the Ycf4 family.

The protein resides in the plastid. It is found in the chloroplast thylakoid membrane. Seems to be required for the assembly of the photosystem I complex. In Carpobrotus chilensis (Sea fig), this protein is Photosystem I assembly protein Ycf4.